The sequence spans 1235 residues: Topoisomerase 1-associated factor 1 (1235 aa).

Disordered stretches follow at residues 327–357, 584–610, 812–841, and 897–1235; these read RERK…GPPV, GEEA…HAER, EGAA…TEAR, and EFSP…SDEE. The span at 585–603 shows a compositional bias: acidic residues; it reads EEAEDVGVPEDNDADDSGD. The segment covering 929–947 has biased composition (acidic residues); sequence DDDEEEIRGFLGDDDDEDF. Residues 964–973 are compositionally biased toward basic residues; it reads QKKRQRKRRR. Residues 977–986 are compositionally biased toward acidic residues; sequence SGDEEDEGVS. The segment covering 999 to 1044 has biased composition (basic and acidic residues); sequence EKELEKIRKIKSEMYVHASDDETDDERDREFFERERKRQETKDSKF. Composition is skewed to acidic residues over residues 1070–1081 and 1099–1118; these read VLDDEPESDESE and SEEE…SDEE. The segment covering 1124–1150 has biased composition (basic residues); that stretch reads AKSKTSKRKAAVPSKRPARRPGTAKKR. Over residues 1156–1170 the composition is skewed to acidic residues; it reads SDNDEDEDEEEDAMD. Basic and acidic residues predominate over residues 1193–1202; sequence LGRRIDKMAM. The segment covering 1203–1212 has biased composition (acidic residues); it reads DDGDEDEDDQ.

This sequence belongs to the timeless family. In terms of assembly, component of the fork protection complex (FPC) consisting of tof-1 and csm-3.

Its subcellular location is the nucleus. Functionally, forms a fork protection complex (FPC) with csm-3 and which is required for chromosome segregation during meiosis and DNA damage repair. FPC coordinates leading and lagging strand synthesis and moves with the replication fork. FPC stabilizes replication forks in a configuration that is recognized by replication checkpoint sensors. The chain is Topoisomerase 1-associated factor 1 (tof-1) from Neurospora crassa (strain ATCC 24698 / 74-OR23-1A / CBS 708.71 / DSM 1257 / FGSC 987).